We begin with the raw amino-acid sequence, 129 residues long: Small ribosomal subunit protein uS13 (129 aa).

The segment at 96–129 (GLPVRGQRTSTNARTRKGPRKTVGVSKAAAAAKA) is disordered.

The protein belongs to the universal ribosomal protein uS13 family. As to quaternary structure, part of the 30S ribosomal subunit. Forms a loose heterodimer with protein S19. Forms two bridges to the 50S subunit in the 70S ribosome.

Located at the top of the head of the 30S subunit, it contacts several helices of the 16S rRNA. In the 70S ribosome it contacts the 23S rRNA (bridge B1a) and protein L5 of the 50S subunit (bridge B1b), connecting the 2 subunits; these bridges are implicated in subunit movement. Contacts the tRNAs in the A and P-sites. The protein is Small ribosomal subunit protein uS13 of Opitutus terrae (strain DSM 11246 / JCM 15787 / PB90-1).